A 310-amino-acid polypeptide reads, in one-letter code: Putative RING-H2 finger protein ATL53 (310 aa).

Residues 62 to 82 form a helical membrane-spanning segment; that stretch reads VIAIFGIFATAFLLAAYYTLV. The RING-type; atypical zinc finger occupies 155-197; the sequence is CSICLGEFNEDESLRLLPKCNHTFHVVCIDRWLKSHSNCPLCR.

This sequence belongs to the RING-type zinc finger family. ATL subfamily.

It localises to the membrane. It carries out the reaction S-ubiquitinyl-[E2 ubiquitin-conjugating enzyme]-L-cysteine + [acceptor protein]-L-lysine = [E2 ubiquitin-conjugating enzyme]-L-cysteine + N(6)-ubiquitinyl-[acceptor protein]-L-lysine.. The protein operates within protein modification; protein ubiquitination. This chain is Putative RING-H2 finger protein ATL53 (ATL53), found in Arabidopsis thaliana (Mouse-ear cress).